Reading from the N-terminus, the 358-residue chain is Putative ankyrin repeat protein FPV242 (358 aa).

10 ANK repeats span residues 6–35, 40–69, 91–118, 119–147, 149–177, 180–209, 214–243, 248–277, 280–312, and 316–345; these read NNYRKLRKAIINEDIEEIKYIIEKDPNMIV, NNHTLLHIAIMYRKVNAVKVLLDKGDNLVY, TRRNKISNALEKINNHKKIIEALVDKGV, ELTGLEIALSCKNIWLIKFLIEKGISVEY, GFFPVGVNYNTIDIDICKVLLENKIDINK, CGETLVRYAIRSSDLNLLKYLISKGADIEK, EQDPNIIEAVEKGNLGIVEYLIDNGISIDT, NHKPAIYYAILAGHYNMVDLLLRRGANPFI, EGNTSLISVATQAKRNRLKLINLLLKYGVRLPG, and YYIQPILLDYSYETYNIIHILLEHGLRITS.

This chain is Putative ankyrin repeat protein FPV242, found in Fowlpox virus (strain NVSL) (FPV).